Here is a 310-residue protein sequence, read N- to C-terminus: Protoheme IX farnesyltransferase (310 aa).

Transmembrane regions (helical) follow at residues 26 to 46 (VMSL…ATVH), 47 to 67 (PMIA…SGAL), 95 to 115 (GEAL…LGLA), 118 to 138 (LFAA…YSMW), 147 to 167 (IVIG…VATG), 174 to 194 (LFMF…LALF), 220 to 240 (VLAY…TGIG), 243 to 263 (LYLV…VRIW), and 281 to 301 (FFRF…AEAA).

It belongs to the UbiA prenyltransferase family. Protoheme IX farnesyltransferase subfamily. Interacts with CtaA.

Its subcellular location is the cell inner membrane. The enzyme catalyses heme b + (2E,6E)-farnesyl diphosphate + H2O = Fe(II)-heme o + diphosphate. Its pathway is porphyrin-containing compound metabolism; heme O biosynthesis; heme O from protoheme: step 1/1. Its function is as follows. Converts heme B (protoheme IX) to heme O by substitution of the vinyl group on carbon 2 of heme B porphyrin ring with a hydroxyethyl farnesyl side group. The protein is Protoheme IX farnesyltransferase of Cereibacter sphaeroides (strain ATCC 17025 / ATH 2.4.3) (Rhodobacter sphaeroides).